The chain runs to 194 residues: Isopentenyl-diphosphate Delta-isomerase (194 aa).

The Mn(2+) site is built by His-27 and His-34. Residues 32 to 166 (ALHLAFSCHV…PWAFSPWLTL (135 aa)) enclose the Nudix hydrolase domain. Residue Cys-69 is part of the active site. Mn(2+) is bound at residue His-71. Position 89 (Glu-89) interacts with Mg(2+). Mn(2+) is bound by residues Glu-116 and Glu-118. Glu-118 is a catalytic residue.

This sequence belongs to the IPP isomerase type 1 family. Requires Mg(2+) as cofactor. The cofactor is Mn(2+).

Its subcellular location is the cytoplasm. It catalyses the reaction isopentenyl diphosphate = dimethylallyl diphosphate. Its pathway is isoprenoid biosynthesis; dimethylallyl diphosphate biosynthesis; dimethylallyl diphosphate from isopentenyl diphosphate: step 1/1. Its function is as follows. Catalyzes the 1,3-allylic rearrangement of the homoallylic substrate isopentenyl (IPP) to its highly electrophilic allylic isomer, dimethylallyl diphosphate (DMAPP). This Clavibacter michiganensis subsp. michiganensis (strain NCPPB 382) protein is Isopentenyl-diphosphate Delta-isomerase.